The chain runs to 390 residues: Transposase for insertion sequence element IS21 (390 aa).

In terms of domain architecture, HTH IS21-type spans 5–66 (EDFYMIKQMR…PFMDYIDMRL (62 aa)). The segment at residues 20–39 (IVDIATQIGCSERTVRRYLK) is a DNA-binding region (H-T-H motif). An Integrase catalytic domain is found at 111–285 (FETQPRYQLQ…TPEQRFALEQ (175 aa)).

This sequence belongs to the transposase IS21/IS408/IS1162 family.

In terms of biological role, involved in the transposition of the insertion sequence. The polypeptide is Transposase for insertion sequence element IS21 (istA) (Pseudomonas aeruginosa).